A 118-amino-acid chain; its full sequence is Small ribosomal subunit protein uS13 (118 aa).

Positions 95-118 are disordered; sequence LPVRGQRTRTNARTRKGPKKLINK.

The protein belongs to the universal ribosomal protein uS13 family. As to quaternary structure, part of the 30S ribosomal subunit. Forms a loose heterodimer with protein S19. Forms two bridges to the 50S subunit in the 70S ribosome.

Its function is as follows. Located at the top of the head of the 30S subunit, it contacts several helices of the 16S rRNA. In the 70S ribosome it contacts the 23S rRNA (bridge B1a) and protein L5 of the 50S subunit (bridge B1b), connecting the 2 subunits; these bridges are implicated in subunit movement. Contacts the tRNAs in the A and P-sites. This Blochmanniella floridana protein is Small ribosomal subunit protein uS13.